The primary structure comprises 349 residues: Anthranilate phosphoribosyltransferase (349 aa).

5-phospho-alpha-D-ribose 1-diphosphate is bound by residues Gly82, 85-86 (GD), 92-95 (NVSS), 110-118 (KHGNRAVSG), and Ser122. Gly82 is a binding site for anthranilate. Ser94 contacts Mg(2+). Asn113 lines the anthranilate pocket. Residue Arg168 participates in anthranilate binding. The Mg(2+) site is built by Asp227 and Glu228.

This sequence belongs to the anthranilate phosphoribosyltransferase family. In terms of assembly, homodimer. It depends on Mg(2+) as a cofactor.

The catalysed reaction is N-(5-phospho-beta-D-ribosyl)anthranilate + diphosphate = 5-phospho-alpha-D-ribose 1-diphosphate + anthranilate. It participates in amino-acid biosynthesis; L-tryptophan biosynthesis; L-tryptophan from chorismate: step 2/5. Functionally, catalyzes the transfer of the phosphoribosyl group of 5-phosphorylribose-1-pyrophosphate (PRPP) to anthranilate to yield N-(5'-phosphoribosyl)-anthranilate (PRA). This chain is Anthranilate phosphoribosyltransferase, found in Pseudomonas aeruginosa (strain LESB58).